We begin with the raw amino-acid sequence, 334 residues long: Chitin synthase export chaperone (334 aa).

7 helical membrane-spanning segments follow: residues 49–69, 85–105, 123–143, 159–179, 185–205, 220–240, and 244–264; these read IIFEGAASVMHIVALIMTVIM, ILSFFYLYMLLTAMSLIIDAG, GLSSAVITCLLINGFVGFQLY, LAAFAISFLVSLATFKSWAGL, VGLFVVLYLLNAVQLFVYVAM, LGDIAFGIFFFVAGQVLLYAF, and ICIAISHYLDGLFLATVCNLL.

It belongs to the CHS7 family.

The protein resides in the endoplasmic reticulum membrane. Its function is as follows. Chaperone required for the export of the chitin synthase chs3 from the endoplasmic reticulum. Plays a critical role in cell wall integrity and virulence. The polypeptide is Chitin synthase export chaperone (Fusarium oxysporum f. sp. lycopersici (strain 4287 / CBS 123668 / FGSC 9935 / NRRL 34936) (Fusarium vascular wilt of tomato)).